The sequence spans 122 residues: Large ribosomal subunit protein uL14 (122 aa).

The protein belongs to the universal ribosomal protein uL14 family. As to quaternary structure, part of the 50S ribosomal subunit. Forms a cluster with proteins L3 and L19. In the 70S ribosome, L14 and L19 interact and together make contacts with the 16S rRNA in bridges B5 and B8.

Its function is as follows. Binds to 23S rRNA. Forms part of two intersubunit bridges in the 70S ribosome. The chain is Large ribosomal subunit protein uL14 from Sulfurihydrogenibium sp. (strain YO3AOP1).